The primary structure comprises 412 residues: ATP phosphoribosyltransferase regulatory subunit (412 aa).

Belongs to the class-II aminoacyl-tRNA synthetase family. HisZ subfamily. Heteromultimer composed of HisG and HisZ subunits.

It localises to the cytoplasm. The protein operates within amino-acid biosynthesis; L-histidine biosynthesis; L-histidine from 5-phospho-alpha-D-ribose 1-diphosphate: step 1/9. Functionally, required for the first step of histidine biosynthesis. May allow the feedback regulation of ATP phosphoribosyltransferase activity by histidine. The polypeptide is ATP phosphoribosyltransferase regulatory subunit (Dehalococcoides mccartyi (strain ATCC BAA-2266 / KCTC 15142 / 195) (Dehalococcoides ethenogenes (strain 195))).